The chain runs to 743 residues: TSL-kinase interacting protein 1 (743 aa).

Residues 53–104 (RQWAAWTHQEEESFFTALRQVGKNFEKITSRVQSKNKDQVRHYYYRLVRRMN) enclose the SANT domain. Disordered regions lie at residues 486-523 (SGVH…PGEW) and 626-679 (SPKG…TPCG). Residues 488–499 (VHDRPARSRDDY) are compositionally biased toward basic and acidic residues.

As to quaternary structure, interacts only with active kinase forms of TOUSLED. Interacts with SNL1. Post-translationally, phosphorylated in vitro by TOUSLED. In terms of tissue distribution, expressed in flowers, roots and leaves.

The protein resides in the nucleus. This is TSL-kinase interacting protein 1 (TKI1) from Arabidopsis thaliana (Mouse-ear cress).